The following is a 127-amino-acid chain: Aspartate 1-decarboxylase (127 aa).

S25 serves as the catalytic Schiff-base intermediate with substrate; via pyruvic acid. A Pyruvic acid (Ser) modification is found at S25. Position 57 (T57) interacts with substrate. Residue Y58 is the Proton donor of the active site. 73-75 (GAA) serves as a coordination point for substrate.

It belongs to the PanD family. In terms of assembly, heterooctamer of four alpha and four beta subunits. It depends on pyruvate as a cofactor. Post-translationally, is synthesized initially as an inactive proenzyme, which is activated by self-cleavage at a specific serine bond to produce a beta-subunit with a hydroxyl group at its C-terminus and an alpha-subunit with a pyruvoyl group at its N-terminus.

The protein localises to the cytoplasm. The catalysed reaction is L-aspartate + H(+) = beta-alanine + CO2. It functions in the pathway cofactor biosynthesis; (R)-pantothenate biosynthesis; beta-alanine from L-aspartate: step 1/1. In terms of biological role, catalyzes the pyruvoyl-dependent decarboxylation of aspartate to produce beta-alanine. The sequence is that of Aspartate 1-decarboxylase from Carboxydothermus hydrogenoformans (strain ATCC BAA-161 / DSM 6008 / Z-2901).